Consider the following 84-residue polypeptide: Small ribosomal subunit protein eS27 (84 aa).

Residues 38–60 (CPKCGATTTTFSHAHRQILCQKC) form a C4-type zinc finger.

It belongs to the eukaryotic ribosomal protein eS27 family. In terms of assembly, component of the small ribosomal subunit. It depends on Zn(2+) as a cofactor.

The protein localises to the cytoplasm. Component of the small ribosomal subunit. The ribosome is a large ribonucleoprotein complex responsible for the synthesis of proteins in the cell. Required for proper rRNA processing and maturation of 18S rRNAs. This chain is Small ribosomal subunit protein eS27 (RPS27), found in Entamoeba histolytica (strain ATCC 30459 / HM-1:IMSS / ABRM).